The primary structure comprises 700 residues: Polyribonucleotide nucleotidyltransferase (700 aa).

2 residues coordinate Mg(2+): D485 and D491. The 60-residue stretch at 552 to 611 (PRITVIKINPEKIRDVIGKGGAVIRALTEETGTTIELEDDGTVKIASSNGEATKEAIRRI) folds into the KH domain. In terms of domain architecture, S1 motif spans 621–689 (GRIYNGKVIR…RQGRVRLSIK (69 aa)).

Belongs to the polyribonucleotide nucleotidyltransferase family. In terms of assembly, component of the RNA degradosome, which is a multiprotein complex involved in RNA processing and mRNA degradation. Requires Mg(2+) as cofactor.

The protein resides in the cytoplasm. It carries out the reaction RNA(n+1) + phosphate = RNA(n) + a ribonucleoside 5'-diphosphate. In terms of biological role, involved in mRNA degradation. Catalyzes the phosphorolysis of single-stranded polyribonucleotides processively in the 3'- to 5'-direction. This is Polyribonucleotide nucleotidyltransferase from Shewanella baltica (strain OS155 / ATCC BAA-1091).